Here is a 178-residue protein sequence, read N- to C-terminus: Thymidine kinase (178 aa).

13–20 (GPMFAGKS) provides a ligand contact to ATP. The active-site Proton acceptor is E85. Residue F115 participates in substrate binding. Zn(2+)-binding residues include C140 and C143. Position 159-163 (159-163 (IEIIG)) interacts with substrate. Residues C172 and C175 each contribute to the Zn(2+) site.

The protein belongs to the thymidine kinase family.

It carries out the reaction thymidine + ATP = dTMP + ADP + H(+). This is Thymidine kinase (TK) from Myxoma virus (strain Uriarra) (MYXV).